Consider the following 271-residue polypeptide: Ubiquitin thioesterase OTUB1 (271 aa).

The residue at position 2 (Ala-2) is an N-acetylalanine. Ser-16 carries the phosphoserine modification. Tyr-26 bears the Phosphotyrosine mark. The region spanning 80–271 (SYIRKTRPDG…RPGHYDILYK (192 aa)) is the OTU domain. Asp-88 is an active-site residue. Cys-91 (nucleophile) is an active-site residue. 2 ubiquitin-conjugating enzyme E2 binding regions span residues 130–138 (FTEFTIEDF) and 169–177 (DYLVVYLRL). The tract at residues 189–195 (FFEHFIE) is free ubiquitin binding. Residues 206-213 (QEVEPMCK) are ubiquitin-conjugating enzyme E2 binding. 2 free ubiquitin binding regions span residues 214–221 (ESDHIHII) and 245–251 (NPHVFPE). His-265 is an active-site residue.

The protein belongs to the peptidase C65 family. In terms of assembly, interacts with RNF128. Forms a ternary complex with RNF128 and USP8. Interacts with FUS and RACK1. Interacts with UBE2D1/UBCH5A, UBE2W/UBC16 and UBE2N/UBC13. Phosphorylation at Tyr-26 by SRC and SRMS promotes deubiquitination of RPTOR via a non-catalytic process.

It localises to the cytoplasm. The catalysed reaction is Thiol-dependent hydrolysis of ester, thioester, amide, peptide and isopeptide bonds formed by the C-terminal Gly of ubiquitin (a 76-residue protein attached to proteins as an intracellular targeting signal).. Its activity is regulated as follows. By free ubiquitin: binding of free ubiquitin triggers conformational changes in the OTU domain and formation of a ubiquitin-binding helix in the N-terminus, promoting binding of the conjugated donor ubiquitin in UBE2N/UBC13 to OTUB1. In terms of biological role, hydrolase that can specifically remove compared to 'Lys-48'-linked conjugated ubiquitin from proteins and plays an important regulatory role at the level of protein turnover by preventing degradation. Regulator of T-cell anergy, a phenomenon that occurs when T-cells are rendered unresponsive to antigen rechallenge and no longer respond to their cognate antigen. Acts via its interaction with RNF128/GRAIL. Surprisingly, it regulates RNF128-mediated ubiquitination, but does not deubiquitinate polyubiquitinated RNF128. Deubiquitinates estrogen receptor alpha (ESR1). Mediates deubiquitination of 'Lys-48'-linked polyubiquitin chains, but not 'Lys-63'-linked polyubiquitin chains. Not able to cleave di-ubiquitin. Also capable of removing NEDD8 from NEDD8 conjugates, but with a much lower preference compared to 'Lys-48'-linked ubiquitin. Its function is as follows. Plays a key non-catalytic role in DNA repair regulation by inhibiting activity of RNF168, an E3 ubiquitin-protein ligase that promotes accumulation of 'Lys-63'-linked histone H2A and H2AX at DNA damage sites. Inhibits RNF168 independently of ubiquitin thioesterase activity by binding and inhibiting UBE2N/UBC13, the E2 partner of RNF168, thereby limiting spreading of 'Lys-63'-linked histone H2A and H2AX marks. Inhibition occurs by binding to free ubiquitin: free ubiquitin acts as an allosteric regulator that increases affinity for UBE2N/UBC13 and disrupts interaction with UBE2V1. The OTUB1-UBE2N/UBC13-free ubiquitin complex adopts a configuration that mimics a cleaved 'Lys48'-linked di-ubiquitin chain. Acts as a regulator of mTORC1 and mTORC2 complexes. When phosphorylated at Tyr-26, acts as an activator of the mTORC1 complex by mediating deubiquitination of RPTOR via a non-catalytic process: acts by binding and inhibiting the activity of the ubiquitin-conjugating enzyme E2 (UBE2D1/UBCH5A, UBE2W/UBC16 and UBE2N/UBC13), thereby preventing ubiquitination of RPTOR. Can also act as an inhibitor of the mTORC1 and mTORC2 complexes in response to amino acids by mediating non-catalytic deubiquitination of DEPTOR. In Mus musculus (Mouse), this protein is Ubiquitin thioesterase OTUB1 (Otub1).